Here is a 411-residue protein sequence, read N- to C-terminus: MKKRKGLLIILDGLGDRPIKEFGGKTPLEYAKTPNMDKLAKLGILGQQDPIKPGQPAGSDTAHLSIFGYDPYKVYRGRGFLEALGVGLDLDEDDLAFRVNFATIENGIITDRRAGRISTEEAHELAKAIQENVKLPVDFIFVGATGHRAVLVLKGMAKGYRVGENDPHEAGKPPHRFTWEDEESKRVAEILEEFVRQAHEVLERHPINEKRRKEGKPVANYLLIRGAGTYPDIPMKFTEQWKVRAGAVIAVSLVKGVARAIGFDVYTPEGATGEYNTDEMAKAKKTVELLKEYDFVFLHFKPTDAAGHDNNPKLKAEMIEKADRMIGYIIEHINLEDVVIAITGDHSTPCEVMNHSGDPVPLLIVGGGVRPDHTESFGERECMRGGLGRIRGHDIVPVMMDLMNRSEKFGA.

It belongs to the BPG-independent phosphoglycerate mutase family. A-PGAM subfamily.

The catalysed reaction is (2R)-2-phosphoglycerate = (2R)-3-phosphoglycerate. It participates in carbohydrate degradation; glycolysis; pyruvate from D-glyceraldehyde 3-phosphate: step 3/5. Its function is as follows. Catalyzes the interconversion of 2-phosphoglycerate and 3-phosphoglycerate. The chain is 2,3-bisphosphoglycerate-independent phosphoglycerate mutase from Thermococcus gammatolerans (strain DSM 15229 / JCM 11827 / EJ3).